A 50-amino-acid chain; its full sequence is Cuticle protein CP498 (50 aa).

Tandem repeats lie at residues 6-23 (ATVG…LIQL) and 30-47 (ILEG…FVTY).

As to expression, calcified shell.

The protein is Cuticle protein CP498 of Cancer pagurus (Rock crab).